Consider the following 729-residue polypeptide: Solute carrier family 15 member 2 (729 aa).

The interval 1-35 (MNPFQKNESKETLFSPVSTEEMLPRPPSPPKKSPP) is disordered. Topologically, residues 1–57 (MNPFQKNESKETLFSPVSTEEMLPRPPSPPKKSPPKIFGSSYPVSIAFIVVNEFCER) are cytoplasmic. Phosphoserine is present on Ser9. At Thr12 the chain carries Phosphothreonine. Position 28 is a phosphoserine (Ser28). A helical transmembrane segment spans residues 58–78 (FSYYGMKAVLTLYFLYFLHWN). Topologically, residues 79–87 (EDTSTSVYH) are extracellular. Residues 88–108 (AFSSLCYFTPILGAAIADSWL) traverse the membrane as a helical segment. Topologically, residues 109–113 (GKFKT) are cytoplasmic. A helical transmembrane segment spans residues 114–134 (IIYLSLVYVLGHVFKSLGAIP). Residues 135–139 (ILGGK) are Extracellular-facing. A helical transmembrane segment spans residues 140–160 (MLHTILSLVGLSLIALGTGGI). Over 161–183 (KPCVAAFGGDQFEEEHAEARTRY) the chain is Cytoplasmic. The chain crosses the membrane as a helical span at residues 184-204 (FSVFYLAINAGSLISTFITPM). Topologically, residues 205–217 (LRGDVKCFGQDCY) are extracellular. Residues 218-238 (ALAFGVPGLLMVLALVVFAMG) form a helical membrane-spanning segment. The Cytoplasmic segment spans residues 239 to 295 (SKMYRKPPPEGNIVAQVIKCIWFALCNRFRNRSGDLPKRQHWLDWAAEKYPKHLIAD). A helical transmembrane segment spans residues 296-316 (VKALTRVLFLYIPLPMFWALL). The Extracellular portion of the chain corresponds to 317 to 343 (DQQGSRWTLQANKMNGDLGFFVLQPDQ). Residues 344–364 (MQVLNPFLVLIFIPLFDLVIY) form a helical membrane-spanning segment. At 365–380 (RLISKCRINFSSLRKM) the chain is on the cytoplasmic side. A helical transmembrane segment spans residues 381–401 (AVGMILACLAFAVAALVETKI). Topologically, residues 402–611 (NGMIHPQPAS…PVNKLSIAWQ (210 aa)) are extracellular. The interval 402 to 611 (NGMIHPQPAS…PVNKLSIAWQ (210 aa)) is extracellular domain (ECD). Asn435, Asn448, Asn528, and Asn587 each carry an N-linked (GlcNAc...) asparagine glycan. A helical membrane pass occupies residues 612–632 (LPQYVLVTAAEVMFSVTGLEF). Residues 633–643 (SYSQAPSSMKS) lie on the Cytoplasmic side of the membrane. A helical transmembrane segment spans residues 644 to 664 (VLQAAWLLTVAVGNIIVLVVA). Residues 665-674 (QFSGLAQWAE) are Extracellular-facing. The helical transmembrane segment at 675-695 (FVLFSCLLLVVCLIFSVMAYY) threads the bilayer. Residues 696 to 729 (YVPLKSEDTREATDKQIPAVQGNMINLETKNTRL) lie on the Cytoplasmic side of the membrane.

This sequence belongs to the major facilitator superfamily. Proton-dependent oligopeptide transporter (POT/PTR) (TC 2.A.17) family. In terms of assembly, interacts (via extracellular domain region) with trypsin. In terms of tissue distribution, strongly expressed in kidney cortex and medulla. Also detected in brain, lung and spleen. Expressed in choroid plexus.

The protein localises to the apical cell membrane. It localises to the cytoplasmic vesicle. Its subcellular location is the phagosome membrane. The protein resides in the cell membrane. It carries out the reaction a dipeptide(out) + 2 H(+)(out) = a dipeptide(in) + 2 H(+)(in). The catalysed reaction is glycyl-L-leucine(out) + 2 H(+)(out) = glycyl-L-leucine(in) + 2 H(+)(in). The enzyme catalyses glycyl-L-lysine(out) + 2 H(+)(out) = glycyl-L-lysine(in) + 2 H(+)(in). It catalyses the reaction glycyl-L-glutamate(out) + 3 H(+)(out) = glycyl-L-glutamate(in) + 3 H(+)(in). It carries out the reaction L-alanyl-L-alanine(out) + 2 H(+)(out) = L-alanyl-L-alanine(in) + 2 H(+)(in). The catalysed reaction is an L-amino acid tripeptide(out) + 2 H(+)(out) = an L-amino acid tripeptide(in) + 2 H(+)(in). The enzyme catalyses N-acetyl-D-muramoyl-L-alanyl-D-isoglutamine(out) + 3 H(+)(out) = N-acetyl-D-muramoyl-L-alanyl-D-isoglutamine(in) + 3 H(+)(in). It catalyses the reaction carnosine(out) + 2 H(+)(out) = carnosine(in) + 2 H(+)(in). Its function is as follows. Proton-coupled amino-acid transporter that transports oligopeptides of 2 to 4 amino acids with a preference for dipeptides. Transports neutral and anionic dipeptides with a proton to peptide stoichiometry of 2:1 or 3:1. In kidney, involved in the absorption of circulating di- and tripeptides from the glomerular filtrate. Can also transport beta-lactam antibiotics, such as the aminocephalosporin cefadroxil, and other antiviral and anticancer drugs. Transports the dipeptide-like aminopeptidase inhibitor bestatin. Also able to transport carnosine. Involved in innate immunity by promoting the detection of microbial pathogens by NOD-like receptors (NLRs). Mediates transport of bacterial peptidoglycans across the plasma membrane or, in macrophages, the phagosome membrane: catalyzes the transport of certain bacterial peptidoglycans, such as muramyl dipeptide (MDP), the NOD2 ligand. The polypeptide is Solute carrier family 15 member 2 (Rattus norvegicus (Rat)).